Here is a 772-residue protein sequence, read N- to C-terminus: Phosphatidylinositol 4-phosphate 5-kinase 5 (772 aa).

A disordered region spans residues 22–56; it reads AKKRANSVFGTVSVAPHTDNDTTTDDNDDETTTNR. Over residues 43–52 the composition is skewed to acidic residues; the sequence is TTTDDNDDET. MORN repeat units follow at residues 75–97, 98–120, 121–143, 144–166, 167–189, 190–212, 213–235, and 236–257; these read YTGQ…DGCM, YIGD…SGAT, YEGE…SGDA, YKGQ…NGDA, YDGE…DGSY, YIGE…NGNR, YDGF…NGSF, and YVGH…SGNE. The PIPK domain maps to 377 to 768; sequence SKGHRNYELM…RFRDFIFKVF (392 aa). Residues 646-665 form a disordered region; it reads SGARTPIGESEEESGPRLSR. The activation loop stretch occupies residues 728 to 749; it reads YDISKKLEHAYKSIQYDPSSIS.

It carries out the reaction a 1,2-diacyl-sn-glycero-3-phospho-(1D-myo-inositol 4-phosphate) + ATP = a 1,2-diacyl-sn-glycero-3-phospho-(1D-myo-inositol-4,5-bisphosphate) + ADP + H(+). The protein is Phosphatidylinositol 4-phosphate 5-kinase 5 (PIP5K5) of Arabidopsis thaliana (Mouse-ear cress).